Consider the following 226-residue polypeptide: tRNA (guanine-N(7)-)-methyltransferase (226 aa).

Residues aspartate 59, glutamate 84, and aspartate 111 each coordinate S-adenosyl-L-methionine. Aspartate 169 provides a ligand contact to substrate.

The protein belongs to the class I-like SAM-binding methyltransferase superfamily. TrmB family.

It carries out the reaction guanosine(46) in tRNA + S-adenosyl-L-methionine = N(7)-methylguanosine(46) in tRNA + S-adenosyl-L-homocysteine. The protein operates within tRNA modification; N(7)-methylguanine-tRNA biosynthesis. In terms of biological role, catalyzes the formation of N(7)-methylguanine at position 46 (m7G46) in tRNA. In Chloroherpeton thalassium (strain ATCC 35110 / GB-78), this protein is tRNA (guanine-N(7)-)-methyltransferase.